The chain runs to 123 residues: Probable non-functional immunoglobulin lambda variable 11-55 (123 aa).

An N-terminal signal peptide occupies residues 1–19 (MALTPLLLLLLSHCTGSLS). The segment at 20–44 (RPVLTQPPSLSASPGATARLPCTLS) is framework-1. One can recognise an Ig-like domain in the interval 21-123 (PVLTQPPSLS…YCQVYESSAN (103 aa)). A disulfide bond links C41 and C115. The segment at 45–53 (SDLSVGGKN) is complementarity-determining-1. Residues 54–70 (MFWYQQKLGSSPRLFLY) form a framework-2 region. Positions 71-77 (HYSDSDK) are complementarity-determining-2. The framework-3 stretch occupies residues 78–115 (QLGPGVPSRVSGSKETSSNTAFLLISGLQPEDEADYYC). The complementarity-determining-3 stretch occupies residues 116 to 123 (QVYESSAN).

Immunoglobulins are composed of two identical heavy chains and two identical light chains; disulfide-linked.

It is found in the secreted. Its subcellular location is the cell membrane. Probable non-functional open reading frame (ORF) of V region of the variable domain of immunoglobulin light chains. Non-functional ORF generally cannot participate in the synthesis of a productive immunoglobulin chain due to altered V-(D)-J or switch recombination and/or splicing site (at mRNA level) and/or conserved amino acid change (protein level). Immunoglobulins, also known as antibodies, are membrane-bound or secreted glycoproteins produced by B lymphocytes. In the recognition phase of humoral immunity, the membrane-bound immunoglobulins serve as receptors which, upon binding of a specific antigen, trigger the clonal expansion and differentiation of B lymphocytes into immunoglobulins-secreting plasma cells. Secreted immunoglobulins mediate the effector phase of humoral immunity, which results in the elimination of bound antigens. The antigen binding site is formed by the variable domain of one heavy chain, together with that of its associated light chain. Thus, each immunoglobulin has two antigen binding sites with remarkable affinity for a particular antigen. The variable domains are assembled by a process called V-(D)-J rearrangement and can then be subjected to somatic hypermutations which, after exposure to antigen and selection, allow affinity maturation for a particular antigen. This chain is Probable non-functional immunoglobulin lambda variable 11-55, found in Homo sapiens (Human).